A 695-amino-acid polypeptide reads, in one-letter code: Protein arginine N-methyltransferase 7 (695 aa).

2 SAM-dependent MTase PRMT-type domains span residues 14 to 345 (SVEW…YCVW) and 358 to 684 (RVHP…ITMD). An Omega-N-methylarginine modification is found at arginine 32. Active-site residues include glutamate 144 and glutamate 153.

The protein belongs to the class I-like SAM-binding methyltransferase superfamily. Protein arginine N-methyltransferase family. PRMT7 subfamily. Homodimer and heterodimer. Interacts with CTCFL, PRMT5 and SNRPD3.

Its subcellular location is the cytoplasm. The protein resides in the cytosol. It is found in the nucleus. It carries out the reaction L-arginyl-[protein] + S-adenosyl-L-methionine = N(omega)-methyl-L-arginyl-[protein] + S-adenosyl-L-homocysteine + H(+). Its function is as follows. Arginine methyltransferase that can both catalyze the formation of omega-N monomethylarginine (MMA) and symmetrical dimethylarginine (sDMA), with a preference for the formation of MMA. Specifically mediates the symmetrical dimethylation of arginine residues in the small nuclear ribonucleoproteins Sm D1 (SNRPD1) and Sm D3 (SNRPD3); such methylation being required for the assembly and biogenesis of snRNP core particles. Specifically mediates the symmetric dimethylation of histone H4 'Arg-3' to form H4R3me2s. Plays a role in gene imprinting by being recruited by CTCFL at the H19 imprinted control region (ICR) and methylating histone H4 to form H4R3me2s, possibly leading to recruit DNA methyltransferases at these sites. May also play a role in embryonic stem cell (ESC) pluripotency. Also able to mediate the arginine methylation of histone H2A and myelin basic protein (MBP) in vitro; the relevance of such results is however unclear in vivo. The sequence is that of Protein arginine N-methyltransferase 7 (PRMT7) from Bos taurus (Bovine).